We begin with the raw amino-acid sequence, 132 residues long: Small ribosomal subunit protein uS8 (132 aa).

It belongs to the universal ribosomal protein uS8 family. As to quaternary structure, part of the 30S ribosomal subunit. Contacts proteins S5 and S12.

Its function is as follows. One of the primary rRNA binding proteins, it binds directly to 16S rRNA central domain where it helps coordinate assembly of the platform of the 30S subunit. The protein is Small ribosomal subunit protein uS8 of Nocardia farcinica (strain IFM 10152).